The chain runs to 643 residues: 1-deoxy-D-xylulose-5-phosphate synthase (643 aa).

Residues histidine 78 and 119-121 (AHS) each bind thiamine diphosphate. Residue aspartate 150 coordinates Mg(2+). Thiamine diphosphate contacts are provided by residues 151–152 (GS), asparagine 179, tyrosine 288, and glutamate 370. Asparagine 179 contributes to the Mg(2+) binding site.

Belongs to the transketolase family. DXPS subfamily. Homodimer. It depends on Mg(2+) as a cofactor. Requires thiamine diphosphate as cofactor.

It carries out the reaction D-glyceraldehyde 3-phosphate + pyruvate + H(+) = 1-deoxy-D-xylulose 5-phosphate + CO2. It functions in the pathway metabolic intermediate biosynthesis; 1-deoxy-D-xylulose 5-phosphate biosynthesis; 1-deoxy-D-xylulose 5-phosphate from D-glyceraldehyde 3-phosphate and pyruvate: step 1/1. Catalyzes the acyloin condensation reaction between C atoms 2 and 3 of pyruvate and glyceraldehyde 3-phosphate to yield 1-deoxy-D-xylulose-5-phosphate (DXP). This Brucella abortus (strain 2308) protein is 1-deoxy-D-xylulose-5-phosphate synthase.